The primary structure comprises 284 residues: uncharacterized protein (284 aa).

Belongs to the methyltransferase superfamily.

The protein resides in the cytoplasm. It is found in the nucleus. Functionally, probable methyltransferase. This is an uncharacterized protein from Schizosaccharomyces pombe (strain 972 / ATCC 24843) (Fission yeast).